Consider the following 530-residue polypeptide: Copine-D (530 aa).

2 consecutive C2 domains span residues 1–122 (MNPI…RMKM) and 130–248 (LSGS…EFEI). Positions 25, 31, 85, 87, and 100 each coordinate Ca(2+). The VWFA domain maps to 289-507 (NLMVAIDCTA…ALAHETLKEI (219 aa)).

The protein belongs to the copine family. The cofactor is Ca(2+).

The sequence is that of Copine-D (cpnD) from Dictyostelium discoideum (Social amoeba).